A 302-amino-acid chain; its full sequence is G-protein coupled receptor A5 (302 aa).

Residues 1 to 20 are Extracellular-facing; it reads MADSSNSSLNCTAIHDQTVL. The helical transmembrane segment at 21 to 41 threads the bilayer; that stretch reads ILGQVFNSVWLFISVIFLYIF. At 42–50 the chain is on the cytoplasmic side; sequence ACKLCFRPR. Residues 51 to 71 form a helical membrane-spanning segment; that stretch reads IYLWLSFYTLGFMLWVLCKVL. Topologically, residues 72 to 81 are extracellular; sequence QEYVTGKFKC. The chain crosses the membrane as a helical span at residues 82–102; that stretch reads VITNCIGDFCLVFLSCIMLGI. Over 103–122 the chain is Cytoplasmic; that stretch reads MLDRYLKIQGTLRGGMKDIH. Residues 123 to 143 form a helical membrane-spanning segment; it reads IGIFVSASCFGSLMIALLDGL. The Extracellular segment spans residues 144–173; the sequence is HMGDSEKLQFNGTESFKCLPATSVSSYKAQ. A helical membrane pass occupies residues 174 to 194; it reads LMFKSIFCIICIIMCLILTCL. The Cytoplasmic portion of the chain corresponds to 195 to 208; it reads TAKKVLGTRLRKKY. The chain crosses the membrane as a helical span at residues 209 to 229; sequence VIVGNVGLLSFVNILLWVMIA. The Extracellular segment spans residues 230–249; sequence CGLLKQALESNLSLCPTKQS. Residues 250 to 270 form a helical membrane-spanning segment; that stretch reads TYIYPYTMPVTVIFVLVIYLF. The Cytoplasmic segment spans residues 271–302; it reads SSTHMKNAMRKSGQIRHSLSSPNQVQSSFRLV.

Belongs to the G-protein coupled receptor 1 family.

The protein localises to the host cell membrane. Its subcellular location is the host endoplasmic reticulum membrane. Acts as a viral G-protein coupled receptor that constitutively activates host alphai-type G-proteins, thereby inhibiting host forskolin-triggered CREB activation. This chain is G-protein coupled receptor A5 (A5), found in Connochaetes taurinus (Blue wildebeest).